Here is a 321-residue protein sequence, read N- to C-terminus: Citrate synthase (321 aa).

Residues H248 and D306 contribute to the active site.

Belongs to the citrate synthase family.

It carries out the reaction oxaloacetate + acetyl-CoA + H2O = citrate + CoA + H(+). Its pathway is carbohydrate metabolism; tricarboxylic acid cycle; isocitrate from oxaloacetate: step 1/2. The sequence is that of Citrate synthase (gltA) from Bartonella bacilliformis.